The sequence spans 87 residues: Beta-toxin CsE3 (87 aa).

Residues 1 to 19 form the signal peptide; the sequence is MNSLLIIAACLALIGTVWA. The 66-residue stretch at 20–85 folds into the LCN-type CS-alpha/beta domain; the sequence is KEGYIVNYHT…VWPLPKKKCN (66 aa). 4 disulfide bridges follow: cysteine 31–cysteine 84, cysteine 35–cysteine 60, cysteine 44–cysteine 65, and cysteine 48–cysteine 67. Residue asparagine 85 is modified to Asparagine amide.

Belongs to the long (4 C-C) scorpion toxin superfamily. Sodium channel inhibitor family. Beta subfamily. In terms of tissue distribution, expressed by the venom gland.

The protein resides in the secreted. Beta toxins bind voltage-independently at site-4 of sodium channels (Nav) and shift the voltage of activation toward more negative potentials thereby affecting sodium channel activation and promoting spontaneous and repetitive firing. The protein is Beta-toxin CsE3 of Centruroides sculpturatus (Arizona bark scorpion).